The following is an 84-amino-acid chain: Keratin-associated protein 19-4 (84 aa).

It belongs to the KRTAP type 19 family. Interacts with hair keratins.

In terms of biological role, in the hair cortex, hair keratin intermediate filaments are embedded in an interfilamentous matrix, consisting of hair keratin-associated proteins (KRTAP), which are essential for the formation of a rigid and resistant hair shaft through their extensive disulfide bond cross-linking with abundant cysteine residues of hair keratins. The matrix proteins include the high-sulfur and high-glycine-tyrosine keratins. The polypeptide is Keratin-associated protein 19-4 (KRTAP19-4) (Homo sapiens (Human)).